The primary structure comprises 399 residues: S-adenosylmethionine synthase (399 aa).

Residue H15 participates in ATP binding. Residue D17 participates in Mg(2+) binding. E43 provides a ligand contact to K(+). E56 and Q99 together coordinate L-methionine. The segment at 99 to 109 is flexible loop; sequence QSPDIAGGVDH. Residues 175–177, 242–243, D251, 257–258, A274, and K278 each bind ATP; these read DAK, RF, and RK. An L-methionine-binding site is contributed by D251. K282 lines the L-methionine pocket.

The protein belongs to the AdoMet synthase family. In terms of assembly, homotetramer; dimer of dimers. Mg(2+) serves as cofactor. K(+) is required as a cofactor.

The protein localises to the cytoplasm. The catalysed reaction is L-methionine + ATP + H2O = S-adenosyl-L-methionine + phosphate + diphosphate. The protein operates within amino-acid biosynthesis; S-adenosyl-L-methionine biosynthesis; S-adenosyl-L-methionine from L-methionine: step 1/1. In terms of biological role, catalyzes the formation of S-adenosylmethionine (AdoMet) from methionine and ATP. The overall synthetic reaction is composed of two sequential steps, AdoMet formation and the subsequent tripolyphosphate hydrolysis which occurs prior to release of AdoMet from the enzyme. The sequence is that of S-adenosylmethionine synthase from Lactobacillus helveticus (strain DPC 4571).